The primary structure comprises 388 residues: Chorismate synthase (388 aa).

Positions 39 and 45 each coordinate NADP(+). Residues 132 to 134 (RSS), 251 to 252 (NA), Gly-296, 311 to 315 (KPIPT), and Arg-337 each bind FMN.

This sequence belongs to the chorismate synthase family. Homotetramer. It depends on FMNH2 as a cofactor.

It carries out the reaction 5-O-(1-carboxyvinyl)-3-phosphoshikimate = chorismate + phosphate. It participates in metabolic intermediate biosynthesis; chorismate biosynthesis; chorismate from D-erythrose 4-phosphate and phosphoenolpyruvate: step 7/7. Catalyzes the anti-1,4-elimination of the C-3 phosphate and the C-6 proR hydrogen from 5-enolpyruvylshikimate-3-phosphate (EPSP) to yield chorismate, which is the branch point compound that serves as the starting substrate for the three terminal pathways of aromatic amino acid biosynthesis. This reaction introduces a second double bond into the aromatic ring system. In Staphylococcus aureus (strain Mu50 / ATCC 700699), this protein is Chorismate synthase.